The chain runs to 358 residues: Aminodeoxyfutalosine deaminase (358 aa).

Residues histidine 32 and histidine 34 each coordinate Zn(2+). Substrate-binding residues include arginine 87, aspartate 154, and glycine 188. Histidine 215 serves as a coordination point for Zn(2+). The active-site Proton donor is glutamate 218. Aspartate 296 contacts Zn(2+).

The protein belongs to the metallo-dependent hydrolases superfamily. Adenosine and AMP deaminases family. Zn(2+) serves as cofactor.

It catalyses the reaction 6-amino-6-deoxyfutalosine + H2O + H(+) = futalosine + NH4(+). It functions in the pathway quinol/quinone metabolism; menaquinone biosynthesis. Functionally, catalyzes the deamination of aminodeoxyfutalosine (AFL) into futalosine (FL), a step in the biosynthesis of menaquinone (MK, vitamin K2). To a lesser extent, can also deaminate adenosine, 5'-methylthioadenosine, 5'-deoxyadenosine, and 2'-deoxyadenosine. The chain is Aminodeoxyfutalosine deaminase (add2) from Streptomyces avermitilis (strain ATCC 31267 / DSM 46492 / JCM 5070 / NBRC 14893 / NCIMB 12804 / NRRL 8165 / MA-4680).